The sequence spans 98 residues: DNA-binding protein Fis (98 aa).

The H-T-H motif DNA-binding region spans 74–93; it reads QTRAATMMGINRGTLRKKLK.

Belongs to the transcriptional regulatory Fis family. In terms of assembly, homodimer.

Its function is as follows. Activates ribosomal RNA transcription. Plays a direct role in upstream activation of rRNA promoters. The polypeptide is DNA-binding protein Fis (Photobacterium profundum (strain SS9)).